We begin with the raw amino-acid sequence, 459 residues long: tRNA modification GTPase MnmE (459 aa).

(6S)-5-formyl-5,6,7,8-tetrahydrofolate is bound by residues Arg23, Glu88, and Arg127. Residues 223–381 (GLNTVIVGKP…FKEVIKELFF (159 aa)) enclose the TrmE-type G domain. Asn233 provides a ligand contact to K(+). Residues 233–238 (NVGKSS), 252–258 (TDVPGTT), and 277–280 (DTAG) each bind GTP. Residue Ser237 coordinates Mg(2+). 3 residues coordinate K(+): Thr252, Val254, and Thr257. Thr258 provides a ligand contact to Mg(2+). (6S)-5-formyl-5,6,7,8-tetrahydrofolate is bound at residue Lys459.

The protein belongs to the TRAFAC class TrmE-Era-EngA-EngB-Septin-like GTPase superfamily. TrmE GTPase family. In terms of assembly, homodimer. Heterotetramer of two MnmE and two MnmG subunits. K(+) serves as cofactor.

The protein localises to the cytoplasm. Functionally, exhibits a very high intrinsic GTPase hydrolysis rate. Involved in the addition of a carboxymethylaminomethyl (cmnm) group at the wobble position (U34) of certain tRNAs, forming tRNA-cmnm(5)s(2)U34. In Clostridium novyi (strain NT), this protein is tRNA modification GTPase MnmE.